The following is a 407-amino-acid chain: Bifunctional enzyme IspD/IspF (407 aa).

A 2-C-methyl-D-erythritol 4-phosphate cytidylyltransferase region spans residues 1-246 (MTEASENASA…SSERTHFPDI (246 aa)). Positions 247–407 (RTGNGYDVHA…SVVFPGEVPE (161 aa)) are 2-C-methyl-D-erythritol 2,4-cyclodiphosphate synthase. A divalent metal cation-binding residues include Asp253 and His255. 4-CDP-2-C-methyl-D-erythritol 2-phosphate is bound by residues 253–255 (DVH) and 279–280 (HS). Residue His287 coordinates a divalent metal cation. 4-CDP-2-C-methyl-D-erythritol 2-phosphate-binding positions include 301 to 303 (DIG), 377 to 380 (TTNE), Phe384, and Arg387.

It in the N-terminal section; belongs to the IspD/TarI cytidylyltransferase family. IspD subfamily. This sequence in the C-terminal section; belongs to the IspF family. A divalent metal cation is required as a cofactor.

The enzyme catalyses 2-C-methyl-D-erythritol 4-phosphate + CTP + H(+) = 4-CDP-2-C-methyl-D-erythritol + diphosphate. It carries out the reaction 4-CDP-2-C-methyl-D-erythritol 2-phosphate = 2-C-methyl-D-erythritol 2,4-cyclic diphosphate + CMP. The protein operates within isoprenoid biosynthesis; isopentenyl diphosphate biosynthesis via DXP pathway; isopentenyl diphosphate from 1-deoxy-D-xylulose 5-phosphate: step 2/6. It functions in the pathway isoprenoid biosynthesis; isopentenyl diphosphate biosynthesis via DXP pathway; isopentenyl diphosphate from 1-deoxy-D-xylulose 5-phosphate: step 4/6. Bifunctional enzyme that catalyzes the formation of 4-diphosphocytidyl-2-C-methyl-D-erythritol from CTP and 2-C-methyl-D-erythritol 4-phosphate (MEP) (IspD), and catalyzes the conversion of 4-diphosphocytidyl-2-C-methyl-D-erythritol 2-phosphate (CDP-ME2P) to 2-C-methyl-D-erythritol 2,4-cyclodiphosphate (ME-CPP) with a corresponding release of cytidine 5-monophosphate (CMP) (IspF). The polypeptide is Bifunctional enzyme IspD/IspF (Mesorhizobium japonicum (strain LMG 29417 / CECT 9101 / MAFF 303099) (Mesorhizobium loti (strain MAFF 303099))).